Reading from the N-terminus, the 804-residue chain is DEP domain-containing protein 1A (804 aa).

The DEP domain occupies 24-108; sequence FRVGMPLRKH…DNNQLFRFPA (85 aa). The 41-residue stretch at 282 to 322 folds into the Rho-GAP domain; it reads DYFLNLPEPLLTFEYYELFVNILVVCGYITVSDRTSGIHKI. S513 bears the Phosphoserine mark. The interval 592-647 is interaction with ZNF224; the sequence is AINALQLCCLLLPPPNRRKLQLLMRMISRMSQNVDMPKLHEQIGTRSLMINTFSRC. A coiled-coil region spans residues 726 to 760; sequence EQKISTSQAAIAELLENIVRSKSLSLKEKRRKLKQ.

Can form dimers. Interacts with ZNF224.

The protein localises to the nucleus. Its function is as follows. May be involved in transcriptional regulation as a transcriptional corepressor. The DEPDC1A-ZNF224 complex may play a critical role in bladder carcinogenesis by repressing the transcription of the A20 gene, leading to transport of NF-KB protein into the nucleus, resulting in suppression of apoptosis of bladder cancer cells. This is DEP domain-containing protein 1A (Depdc1a) from Mus musculus (Mouse).